A 348-amino-acid polypeptide reads, in one-letter code: D-alanine--D-alanine ligase (348 aa).

Residues 136–344 form the ATP-grasp domain; that stretch reads KSVFKSYNLP…LEKLVASLIE (209 aa). 171–226 is a binding site for ATP; the sequence is NKIINYPCFIKPANLGSSVGITKAYSKEEFITGIEFAAKYDERIIVEKSIEGRELE. Residues Asp297, Glu311, and Asn313 each contribute to the Mg(2+) site.

This sequence belongs to the D-alanine--D-alanine ligase family. Mg(2+) serves as cofactor. The cofactor is Mn(2+).

The protein localises to the cytoplasm. It carries out the reaction 2 D-alanine + ATP = D-alanyl-D-alanine + ADP + phosphate + H(+). Its pathway is cell wall biogenesis; peptidoglycan biosynthesis. Cell wall formation. This chain is D-alanine--D-alanine ligase, found in Prochlorococcus marinus (strain NATL1A).